The primary structure comprises 572 residues: Far upstream element-binding protein 3 (572 aa).

Position 2 is an N-acetylalanine (Ala2). Glycyl lysine isopeptide (Lys-Gly) (interchain with G-Cter in SUMO2) cross-links involve residues Lys15 and Lys57. Position 76 is a phosphothreonine (Thr76). 4 KH domains span residues 77–141, 162–228, 253–317, and 354–421; these read VITE…KRLL, STIQ…REMV, GGSI…AHII, and VQEI…RQLI. Residue Ser296 is modified to Phosphoserine. The interval 426 to 521 is disordered; the sequence is GGTNLGAPGA…SQPNYSKAWE (96 aa). Residues 496-514 show a composition bias toward low complexity; the sequence is QQPTQQVPSQQSQPQSSQP. Ser539 and Ser569 each carry phosphoserine.

Detected in a number of cell lines.

It localises to the nucleus. In terms of biological role, may interact with single-stranded DNA from the far-upstream element (FUSE). May activate gene expression. The sequence is that of Far upstream element-binding protein 3 (FUBP3) from Homo sapiens (Human).